A 621-amino-acid polypeptide reads, in one-letter code: 1-deoxy-D-xylulose-5-phosphate synthase (621 aa).

Residues histidine 80 and 121 to 123 each bind thiamine diphosphate; that span reads GHS. Mg(2+) is bound at residue aspartate 152. Thiamine diphosphate is bound by residues 153-154, asparagine 181, tyrosine 288, and glutamate 370; that span reads GA. Mg(2+) is bound at residue asparagine 181.

This sequence belongs to the transketolase family. DXPS subfamily. In terms of assembly, homodimer. Requires Mg(2+) as cofactor. Thiamine diphosphate is required as a cofactor.

It catalyses the reaction D-glyceraldehyde 3-phosphate + pyruvate + H(+) = 1-deoxy-D-xylulose 5-phosphate + CO2. It functions in the pathway metabolic intermediate biosynthesis; 1-deoxy-D-xylulose 5-phosphate biosynthesis; 1-deoxy-D-xylulose 5-phosphate from D-glyceraldehyde 3-phosphate and pyruvate: step 1/1. In terms of biological role, catalyzes the acyloin condensation reaction between C atoms 2 and 3 of pyruvate and glyceraldehyde 3-phosphate to yield 1-deoxy-D-xylulose-5-phosphate (DXP). The polypeptide is 1-deoxy-D-xylulose-5-phosphate synthase (Erwinia tasmaniensis (strain DSM 17950 / CFBP 7177 / CIP 109463 / NCPPB 4357 / Et1/99)).